The primary structure comprises 288 residues: Oxaloacetate decarboxylase (288 aa).

Substrate is bound at residue S47. D85 lines the Mg(2+) pocket. The substrate site is built by R156 and H232.

The protein belongs to the isocitrate lyase/PEP mutase superfamily. Oxaloacetate decarboxylase family. In terms of assembly, homotetramer; dimer of dimers. Mg(2+) is required as a cofactor.

The enzyme catalyses oxaloacetate + H(+) = pyruvate + CO2. Functionally, catalyzes the decarboxylation of oxaloacetate into pyruvate. Seems to play a role in maintaining cellular concentrations of bicarbonate and pyruvate. The sequence is that of Oxaloacetate decarboxylase from Rhodopseudomonas palustris (strain TIE-1).